A 142-amino-acid polypeptide reads, in one-letter code: Mediator of RNA polymerase II transcription subunit 21 (142 aa).

Residues 87–131 are a coiled coil; that stretch reads AEEQLSRIDSLQKKLIQVEGEKIEAIKRKESLTKDIEELINEFTE.

It belongs to the Mediator complex subunit 21 family. As to quaternary structure, component of the Mediator complex.

The protein localises to the nucleus. Functionally, component of the Mediator complex, a coactivator involved in the regulated transcription of nearly all RNA polymerase II-dependent genes. Mediator functions as a bridge to convey information from gene-specific regulatory proteins to the basal RNA polymerase II transcription machinery. Mediator is recruited to promoters by direct interactions with regulatory proteins and serves as a scaffold for the assembly of a functional preinitiation complex with RNA polymerase II and the general transcription factors. The chain is Mediator of RNA polymerase II transcription subunit 21 (SRB7) from Eremothecium gossypii (strain ATCC 10895 / CBS 109.51 / FGSC 9923 / NRRL Y-1056) (Yeast).